Consider the following 4083-residue polypeptide: Dynein axonemal heavy chain 3 (4083 aa).

Disordered stretches follow at residues 1 to 37 (MSDT…VSAN) and 111 to 132 (DKTS…PSKK). The interval 1–1357 (MSDTNCSAQK…HVQMITTEAL (1357 aa)) is stem. 2 coiled-coil regions span residues 1026–1052 (IKPI…AWLK) and 1108–1133 (RMTE…YLEK). 4 AAA regions span residues 1358–1579 (YGYE…VLTA), 1639–1870 (EALN…LHCK), 2003–2251 (TIPA…VIQG), and 2362–2613 (EFNS…LLRH). ATP is bound by residues 1396-1403 (GPAGTGKT), 1677-1684 (GDPMGGKT), 2041-2048 (GPTGTGKS), and 2401-2408 (GIGGSGRQ). The segment at 2628–2927 (FKTLLNSKRQ…NSLEKNIEIC (300 aa)) is stalk. Positions 2651-2714 (QKLEFASSQV…DEKEANAAAA (64 aa)) form a coiled coil. AAA regions lie at residues 3012-3242 (LGDP…EISE) and 3455-3679 (IQNF…QIQM).

It belongs to the dynein heavy chain family. Consists of at least two heavy chains and a number of intermediate and light chains.

It is found in the cytoplasm. It localises to the cytoskeleton. The protein localises to the cilium axoneme. Its function is as follows. Force generating protein of respiratory cilia. Produces force towards the minus ends of microtubules. Dynein has ATPase activity; the force-producing power stroke is thought to occur on release of ADP. Involved in sperm motility; implicated in sperm flagellar assembly. This is Dynein axonemal heavy chain 3 (Dnah3) from Mus musculus (Mouse).